Reading from the N-terminus, the 194-residue chain is MSDEIKQIAALIGHHQALEKRVTSLTEQFQAASSQLQQQSETLSRVIRELDSASGNMTDTVRKSVSSALTQVEKELKQAGLAQQKPATEALNQAADTAKAMIHEMRREMSRYTWKSAIYLVLTIFFVLASCVTAFTWFMNDGYSQIAEMQRMEAVWQKKAPLADISRCDGKPCVKVDTRTTYGDKENTWMIIKK.

In terms of biological role, this protein is probably required for relaxation complex formation. In Salmonella typhimurium, this protein is 22 kDa relaxation protein.